The chain runs to 445 residues: Phosphoglucosamine mutase (445 aa).

The Phosphoserine intermediate role is filled by Ser102. Residues Ser102, Asp241, Asp243, and Asp245 each contribute to the Mg(2+) site. Ser102 carries the post-translational modification Phosphoserine.

The protein belongs to the phosphohexose mutase family. It depends on Mg(2+) as a cofactor. Activated by phosphorylation.

The catalysed reaction is alpha-D-glucosamine 1-phosphate = D-glucosamine 6-phosphate. In terms of biological role, catalyzes the conversion of glucosamine-6-phosphate to glucosamine-1-phosphate. The protein is Phosphoglucosamine mutase of Haemophilus influenzae (strain PittEE).